Reading from the N-terminus, the 187-residue chain is Probable chorismate pyruvate-lyase (187 aa).

Residues arginine 81, leucine 119, and glutamate 178 each coordinate substrate.

This sequence belongs to the UbiC family.

It localises to the cytoplasm. It carries out the reaction chorismate = 4-hydroxybenzoate + pyruvate. Its pathway is cofactor biosynthesis; ubiquinone biosynthesis. Its function is as follows. Removes the pyruvyl group from chorismate, with concomitant aromatization of the ring, to provide 4-hydroxybenzoate (4HB) for the ubiquinone pathway. In Thiobacillus denitrificans (strain ATCC 25259 / T1), this protein is Probable chorismate pyruvate-lyase.